We begin with the raw amino-acid sequence, 224 residues long: UPF0758 protein AFE_0358 (224 aa).

Residues 102-224 (GLDSPLRVRQ…PLSLREQGGW (123 aa)) enclose the MPN domain. His-173, His-175, and Asp-186 together coordinate Zn(2+). The JAMM motif motif lies at 173–186 (HNHPSGVAEPSAAD).

It belongs to the UPF0758 family.

In Acidithiobacillus ferrooxidans (strain ATCC 23270 / DSM 14882 / CIP 104768 / NCIMB 8455) (Ferrobacillus ferrooxidans (strain ATCC 23270)), this protein is UPF0758 protein AFE_0358.